Reading from the N-terminus, the 641-residue chain is Pre-mRNA-processing factor 39 (641 aa).

The segment at 1-50 (MEKSPEHCAEGSPSPATESAPSATEPPLPSTEPPLPSTEPPLPSTEPPLP) is disordered. The segment covering 10 to 23 (EGSPSPATESAPSA) has biased composition (low complexity). A compositionally biased stretch (pro residues) spans 24 to 50 (TEPPLPSTEPPLPSTEPPLPSTEPPLP). 7 HAT repeats span residues 50-82 (PPLPPDFEKYWKSVQAYPEDFNTWTYLLQYVEQ), 84-116 (NHLFAARKAFDAFLAHYPYCYGYWKKYADLEKK), 118-150 (NNILEADEVYRRGIQAITLSVDLWMHYLNFLKE), 158-193 (ETSLTLRGTFEHAVVSAGLDFRSDKLWEMYINWETE), 304-336 (NFEEEIKRPYFHVKPLEKAQLNNWKEYLEFELE), 338-370 (GSNERIVILFERCVIACACYEEFWIKYAKYMEN), and 372-407 (SVEGVRHVYNRACHVHLAKKPMVHLLWAAFEEQQGN).

It belongs to the PRP39 family.

It localises to the nucleus. Functionally, involved in pre-mRNA splicing. This Xenopus laevis (African clawed frog) protein is Pre-mRNA-processing factor 39 (prpf39).